Here is a 40-residue protein sequence, read N- to C-terminus: GLAYEYLEQDLGKKSELLLAANPVHKVYDFVXGMKPEVAK.

The protein belongs to the GST superfamily. HSP26 family.

In Zea mays (Maize), this protein is Unknown protein from spot 207 of 2D-PAGE of etiolated coleoptile.